Here is a 478-residue protein sequence, read N- to C-terminus: Glutamyl-tRNA reductase (478 aa).

Residues 49–52, S109, 114–116, and Q120 each bind substrate; these read TCNR and EQQ. The Nucleophile role is filled by C50. Residue 191–196 participates in NADP(+) binding; the sequence is GAGSMG.

It belongs to the glutamyl-tRNA reductase family. Homodimer.

The enzyme catalyses (S)-4-amino-5-oxopentanoate + tRNA(Glu) + NADP(+) = L-glutamyl-tRNA(Glu) + NADPH + H(+). It participates in porphyrin-containing compound metabolism; protoporphyrin-IX biosynthesis; 5-aminolevulinate from L-glutamyl-tRNA(Glu): step 1/2. Its function is as follows. Catalyzes the NADPH-dependent reduction of glutamyl-tRNA(Glu) to glutamate 1-semialdehyde (GSA). This chain is Glutamyl-tRNA reductase, found in Rhodococcus opacus (strain B4).